The sequence spans 65 residues: Ringhalexin (65 aa).

Disulfide bonds link cysteine 3–cysteine 24, cysteine 17–cysteine 42, cysteine 46–cysteine 57, and cysteine 58–cysteine 63.

Expressed by the venom gland.

It localises to the secreted. Functionally, has anticoagulant activity, since it is able to inhibit the activation of coagulation factor X (F10) by coagulation factor VIIa (F7) (IC(50)=123.8 nM). Also shows weak irreversible neurotoxicity. The protein is Ringhalexin of Hemachatus haemachatus (Rinkhals).